We begin with the raw amino-acid sequence, 251 residues long: Copper transport protein CTR1 (251 aa).

A helical transmembrane segment spans residues 90–110; it reads AFGIFVLLFFVAFLARMLEFV. Positions 157–173 are enriched in basic and acidic residues; that stretch reads DESIDKQNSPQHEETTK. The segment at 157–176 is disordered; sequence DESIDKQNSPQHEETTKARG. The helical transmembrane segment at 208–228 threads the bilayer; that stretch reads MLAAMTYTLTYFFAVVIGSGV.

In terms of assembly, oligomer.

Its subcellular location is the cell membrane. Required for high affinity copper (probably reduced Cu I) transport into the cell. The sequence is that of Copper transport protein CTR1 (CTR1) from Candida albicans (strain SC5314 / ATCC MYA-2876) (Yeast).